Reading from the N-terminus, the 557-residue chain is MPSDIEIARAATLKPIAQVAEKLGIPDDALHNYGKHIAKIDHGYIAGLESRKPGKLVLVTAISPTPAGEGKTTTTVGLGDALNRIGEKTMICLREPSLGPCFGMKGGAAGGGKAQVVPMEQINLHFTGDFHAITSAHSLAAALIDNHVYWANELNIDVRRIHWRRVVDMNDRALRAITQSLGGVANGFPREDGFDITVASEVMAVFCLAKDLADLEERLGRIVIAETRDRKLVTLKDVKATGAMTVLLKDALQPNLVQTLEGNPALIHGGPFANIAHGCNSVIATRAGLRLADYTVTEAGFGADLGAEKFLDIKCRQAGLTPSAVVVVATIRALKMHGGVDKKNLGAENIDALEKGFANLARHVTNLRGFGLPVVVGVNHFHADTEAEHAKLKELCRERLDVEAITCRHWAEGGAGAEELARAVVKLSQAEPAPIRHAYETESRLTDKIRAIATKLYGAADIQIETKAAGKLATFEKDGYGHLPICMAKTQYSFSTDPTLMGAPEGHIVGVRDVRLSAGAGFVVAICGEIMTMPGLPRVPAADTIRLDANGQIDGLF.

Residue 65 to 72 participates in ATP binding; sequence TPAGEGKT.

Belongs to the formate--tetrahydrofolate ligase family.

The catalysed reaction is (6S)-5,6,7,8-tetrahydrofolate + formate + ATP = (6R)-10-formyltetrahydrofolate + ADP + phosphate. It participates in one-carbon metabolism; tetrahydrofolate interconversion. This Methylobacterium radiotolerans (strain ATCC 27329 / DSM 1819 / JCM 2831 / NBRC 15690 / NCIMB 10815 / 0-1) protein is Formate--tetrahydrofolate ligase.